A 467-amino-acid polypeptide reads, in one-letter code: Chromosomal replication initiator protein DnaA (467 aa).

The tract at residues 1–90 (MSLSLWQQCL…KPVTQTPQAA (90 aa)) is domain I, interacts with DnaA modulators. Positions 91 to 130 (VTSNVAAPAQVAQTQPQRAAPSMRSGWDNVPAPAEPTYRS) are domain II. The domain III, AAA+ region stretch occupies residues 131–347 (NVNVKHTFDN…GALNRVIANA (217 aa)). ATP is bound by residues glycine 175, glycine 177, lysine 178, and threonine 179. The domain IV, binds dsDNA stretch occupies residues 348-467 (NFTGRAITID…FSNLIRTLSS (120 aa)).

Belongs to the DnaA family. In terms of assembly, oligomerizes as a right-handed, spiral filament on DNA at oriC.

Its subcellular location is the cytoplasm. Its function is as follows. Plays an essential role in the initiation and regulation of chromosomal replication. ATP-DnaA binds to the origin of replication (oriC) to initiate formation of the DNA replication initiation complex once per cell cycle. Binds the DnaA box (a 9 base pair repeat at the origin) and separates the double-stranded (ds)DNA. Forms a right-handed helical filament on oriC DNA; dsDNA binds to the exterior of the filament while single-stranded (ss)DNA is stabiized in the filament's interior. The ATP-DnaA-oriC complex binds and stabilizes one strand of the AT-rich DNA unwinding element (DUE), permitting loading of DNA polymerase. After initiation quickly degrades to an ADP-DnaA complex that is not apt for DNA replication. Binds acidic phospholipids. The sequence is that of Chromosomal replication initiator protein DnaA from Escherichia coli (strain ATCC 8739 / DSM 1576 / NBRC 3972 / NCIMB 8545 / WDCM 00012 / Crooks).